We begin with the raw amino-acid sequence, 156 residues long: Small ribosomal subunit protein uS7 (156 aa).

Belongs to the universal ribosomal protein uS7 family. Part of the 30S ribosomal subunit. Contacts proteins S9 and S11.

Its function is as follows. One of the primary rRNA binding proteins, it binds directly to 16S rRNA where it nucleates assembly of the head domain of the 30S subunit. Is located at the subunit interface close to the decoding center, probably blocks exit of the E-site tRNA. This Tolumonas auensis (strain DSM 9187 / NBRC 110442 / TA 4) protein is Small ribosomal subunit protein uS7.